The chain runs to 262 residues: Small ribosomal subunit protein uS2 (262 aa).

The tract at residues 228-262 (VSNEEVAAEQNINLDDKEESEQAETTEENTSVESN) is disordered. The segment covering 243 to 254 (DKEESEQAETTE) has biased composition (acidic residues).

The protein belongs to the universal ribosomal protein uS2 family.

The chain is Small ribosomal subunit protein uS2 from Staphylococcus epidermidis (strain ATCC 35984 / DSM 28319 / BCRC 17069 / CCUG 31568 / BM 3577 / RP62A).